We begin with the raw amino-acid sequence, 521 residues long: Protein nucleotidyltransferase YdiU (521 aa).

The ATP site is built by glycine 109, glycine 111, arginine 112, lysine 131, aspartate 143, glycine 144, arginine 194, and arginine 201. The Proton acceptor role is filled by aspartate 270. 2 residues coordinate Mg(2+): asparagine 271 and aspartate 280. ATP is bound at residue aspartate 280.

The protein belongs to the SELO family. Requires Mg(2+) as cofactor. Mn(2+) is required as a cofactor.

It catalyses the reaction L-seryl-[protein] + ATP = 3-O-(5'-adenylyl)-L-seryl-[protein] + diphosphate. The catalysed reaction is L-threonyl-[protein] + ATP = 3-O-(5'-adenylyl)-L-threonyl-[protein] + diphosphate. The enzyme catalyses L-tyrosyl-[protein] + ATP = O-(5'-adenylyl)-L-tyrosyl-[protein] + diphosphate. It carries out the reaction L-histidyl-[protein] + UTP = N(tele)-(5'-uridylyl)-L-histidyl-[protein] + diphosphate. It catalyses the reaction L-seryl-[protein] + UTP = O-(5'-uridylyl)-L-seryl-[protein] + diphosphate. The catalysed reaction is L-tyrosyl-[protein] + UTP = O-(5'-uridylyl)-L-tyrosyl-[protein] + diphosphate. Nucleotidyltransferase involved in the post-translational modification of proteins. It can catalyze the addition of adenosine monophosphate (AMP) or uridine monophosphate (UMP) to a protein, resulting in modifications known as AMPylation and UMPylation. In Burkholderia mallei (strain ATCC 23344), this protein is Protein nucleotidyltransferase YdiU.